We begin with the raw amino-acid sequence, 317 residues long: Serpentine receptor class delta-46 (317 aa).

Transmembrane regions (helical) follow at residues phenylalanine 9–isoleucine 29, isoleucine 42–alanine 62, tyrosine 91–valine 111, valine 129–isoleucine 149, glutamine 185–leucine 205, alanine 239–threonine 259, and phenylalanine 269–valine 289.

The protein belongs to the nematode receptor-like protein srd family.

The protein resides in the membrane. This chain is Serpentine receptor class delta-46 (srd-46), found in Caenorhabditis elegans.